The sequence spans 336 residues: MQTNKRLKMASCVKAAAMLGMLLSVSISTTAQADSWRGWNIHPPSYPNGKALESFAKEVAEKTEGRVEPKVYHNAVLGDQPDAIEQTRSGALDFANFNMGPMGPIVPAANVLSLPFIFKSPDDMYRIMDGEIGERFADALAEKNLIVLSWFGSGARSLYNTDHPVETPDDVEGLKVRVMNNDLYVQMIDEMGGNATPMAYGEVYQSLKTGVIDGAENNYPSYESSGHYEVANYYSLTEHLILPECLCVAKASWEELSEKDRQAIREAAEDAAKEQRALWEEGVQASKQKILDAGVKINEVDDKSAFQAKMQPIYDQFVQEHPELESLVTDIQDAQS.

The signal sequence occupies residues 1-33; it reads MQTNKRLKMASCVKAAAMLGMLLSVSISTTAQA. Beta-D-glucuronate-binding positions include His-42, Gln-80, Arg-156, Arg-177, Tyr-200, 217–218, and Glu-244; that span reads NN.

The protein belongs to the bacterial solute-binding protein 7 family. As to quaternary structure, the complex is comprised of an extracytoplasmic solute-binding protein and a heteromeric permease formed by two transmembrane proteins.

It localises to the periplasm. Functionally, solute-binding protein that binds D-glucuronate (in vitro). Probably part of a tripartite ATP-independent periplasmic (TRAP) transport system that mediates solute transport into the cytoplasm. In Chromohalobacter salexigens (strain ATCC BAA-138 / DSM 3043 / CIP 106854 / NCIMB 13768 / 1H11), this protein is Solute-binding protein Csal_2479.